A 157-amino-acid polypeptide reads, in one-letter code: ATP synthase subunit b (157 aa).

The chain crosses the membrane as a helical span at residues 1 to 21; sequence MHFLDESFWLAISFIIFVYLI.

It belongs to the ATPase B chain family. F-type ATPases have 2 components, F(1) - the catalytic core - and F(0) - the membrane proton channel. F(1) has five subunits: alpha(3), beta(3), gamma(1), delta(1), epsilon(1). F(0) has three main subunits: a(1), b(2) and c(10-14). The alpha and beta chains form an alternating ring which encloses part of the gamma chain. F(1) is attached to F(0) by a central stalk formed by the gamma and epsilon chains, while a peripheral stalk is formed by the delta and b chains.

The protein localises to the cell inner membrane. Functionally, f(1)F(0) ATP synthase produces ATP from ADP in the presence of a proton or sodium gradient. F-type ATPases consist of two structural domains, F(1) containing the extramembraneous catalytic core and F(0) containing the membrane proton channel, linked together by a central stalk and a peripheral stalk. During catalysis, ATP synthesis in the catalytic domain of F(1) is coupled via a rotary mechanism of the central stalk subunits to proton translocation. Component of the F(0) channel, it forms part of the peripheral stalk, linking F(1) to F(0). This chain is ATP synthase subunit b, found in Rickettsia bellii (strain RML369-C).